A 475-amino-acid chain; its full sequence is Probable GABA permease (475 aa).

12 consecutive transmembrane segments (helical) span residues 27–47 (VTML…SGHA), 48–68 (IAAA…LVVL), 105–125 (LYWW…AAIL), 127–147 (AWFP…LLTV), 163–183 (FALL…VAIV), 211–231 (AVLG…IVTI), 250–270 (VIWR…SIVP), 296–316 (LIVD…AIYT), 345–365 (PAVL…YFAP), 368–388 (VFTF…LVIA), 413–433 (PWLT…MLIM), and 438–458 (HEVF…LLNA).

This sequence belongs to the amino acid-polyamine-organocation (APC) superfamily. Amino acid transporter (AAT) (TC 2.A.3.1) family.

The protein resides in the membrane. In terms of biological role, involved in the degradation of beta-alanine. This Pseudomonas aeruginosa (strain ATCC 15692 / DSM 22644 / CIP 104116 / JCM 14847 / LMG 12228 / 1C / PRS 101 / PAO1) protein is Probable GABA permease (bauD).